The primary structure comprises 244 residues: MSQLDLNALNELPKVDRVLALAEINAQLETLSAEERVAWALENLPGEYVLSSSFGIQAAVSLHLVNQIRPDIPVILTDTGYLFPETYQFIDELTDKLKLNLKVYRAGESPAWQEARYGKLWEQGVEGIEKYNDINKVEPMNRALKELKAQTWFAGLRREQSGSRAHLPVLATQRGVFKVLPIIDWDNRTVYQYLQKHGLKYHPLWDQGYLSVGDTHTTRKWEPGMAEEETRFFGLKRECGLHEG.

Cys239 (nucleophile; cysteine thiosulfonate intermediate) is an active-site residue.

The protein belongs to the PAPS reductase family. CysH subfamily.

Its subcellular location is the cytoplasm. It carries out the reaction [thioredoxin]-disulfide + sulfite + adenosine 3',5'-bisphosphate + 2 H(+) = [thioredoxin]-dithiol + 3'-phosphoadenylyl sulfate. Its pathway is sulfur metabolism; hydrogen sulfide biosynthesis; sulfite from sulfate: step 3/3. Catalyzes the formation of sulfite from phosphoadenosine 5'-phosphosulfate (PAPS) using thioredoxin as an electron donor. The protein is Phosphoadenosine 5'-phosphosulfate reductase of Salmonella choleraesuis (strain SC-B67).